The following is a 97-amino-acid chain: Cobalt transport protein CbiN (97 aa).

The next 2 membrane-spanning stretches (helical) occupy residues 6–26 (VLMI…YSGL) and 68–88 (SLLF…FFGY).

This sequence belongs to the CbiN family. Forms an energy-coupling factor (ECF) transporter complex composed of an ATP-binding protein (A component, CbiO), a transmembrane protein (T component, CbiQ) and 2 possible substrate-capture proteins (S components, CbiM and CbiN) of unknown stoichimetry.

It is found in the cell membrane. It participates in cofactor biosynthesis; adenosylcobalamin biosynthesis. In terms of biological role, part of the energy-coupling factor (ECF) transporter complex CbiMNOQ involved in cobalt import. The polypeptide is Cobalt transport protein CbiN (Methanococcus maripaludis (strain C5 / ATCC BAA-1333)).